The primary structure comprises 137 residues: Urease subunit beta (137 aa).

A disordered region spans residues 118 to 137; the sequence is IIAEENKVSENANKESGYNR. Positions 126 to 137 are enriched in polar residues; the sequence is SENANKESGYNR.

The protein belongs to the urease beta subunit family. As to quaternary structure, heterotrimer of UreA (gamma), UreB (beta) and UreC (alpha) subunits. Three heterotrimers associate to form the active enzyme.

It localises to the cytoplasm. The enzyme catalyses urea + 2 H2O + H(+) = hydrogencarbonate + 2 NH4(+). Its pathway is nitrogen metabolism; urea degradation; CO(2) and NH(3) from urea (urease route): step 1/1. The sequence is that of Urease subunit beta from Staphylococcus xylosus.